The chain runs to 676 residues: Envelope glycoprotein (676 aa).

The first 32 residues, 1–32, serve as a signal peptide directing secretion; the sequence is MGVTGILQLPRDRFKRTSFFLWVIILFQRTFS. Topologically, residues 33-650 are extracellular; the sequence is IPLGVIHNST…NDNWWTGWRQ (618 aa). Residue Asn-40 is glycosylated (N-linked (GlcNAc...) asparagine; by host). Cystine bridges form between Cys-53-Cys-609, Cys-108-Cys-135, Cys-121-Cys-147, Cys-511-Cys-556, and Cys-601-Cys-608. A receptor-binding region spans residues 54 to 201; it reads RDKLSSTNQL…DFFSSHPLRE (148 aa). N-linked (GlcNAc...) asparagine; by host glycosylation is found at Asn-204, Asn-228, Asn-238, Asn-257, Asn-268, Asn-296, Asn-317, Asn-333, Asn-346, Asn-386, and Asn-413. The tract at residues 305–485 is mucin-like region; sequence ELSFTVVSNG…SGKLGLITNT (181 aa). A compositionally biased stretch (polar residues) spans 315-335; it reads AKNISGQSPARTSSDPGTNTT. The segment at 315–337 is disordered; sequence AKNISGQSPARTSSDPGTNTTTE. Over residues 373-391 the composition is skewed to polar residues; that stretch reads TSPQSLTTKPGPDNSTHNT. Disordered regions lie at residues 373–392 and 402–479; these read TSPQSLTTKPGPDNSTHNTP and TQVE…SGKL. Low complexity predominate over residues 414 to 432; the sequence is DSTASDTPSATTAAGPPKA. The segment covering 433-464 has biased composition (polar residues); sequence ENTNTSKSTDFLDPATTTSPQNHSETAGNNNT. Residues Asn-436, Asn-454, and Asn-462 are each glycosylated (N-linked (GlcNAc...) asparagine; by host). The tract at residues 524 to 539 is fusion peptide; the sequence is GAAIGLAWIPYFGPAA. Residues 554–595 are a coiled coil; the sequence is LICGLRQLANETTQALQLFLRATTELRTFSILNRKAIDFLLQ. An N-linked (GlcNAc...) asparagine; by host glycan is attached at Asn-563. A coiled-coil region spans residues 615-634; the sequence is WTKNITDKIDQIIHDFVDKT. N-linked (GlcNAc...) asparagine; by host glycosylation is present at Asn-618. The chain crosses the membrane as a helical span at residues 651-671; it reads WIPAGIGVTGVIIAVIALFCI. The Important role for host BST2/tetherin antagonism signature appears at 660–664; that stretch reads GVIIA. 2 S-palmitoyl cysteine; by host lipidation sites follow: Cys-670 and Cys-672. Residues 672 to 676 are Cytoplasmic-facing; it reads CKFVF.

The protein belongs to the filoviruses glycoprotein family. As to quaternary structure, homotrimer; each monomer consists of a GP1 and a GP2 subunit linked by disulfide bonds. The resulting peplomers (GP1,2) protrude from the virus surface as spikes. Interacts with host integrin alpha-V/ITGAV. Interacts with host CLEC10A. Also binds to host CD209 and CLEC4M/DC-SIGN(R). Interacts with host FOLR1. Interacts with BST2; this interaction inhibits the antiviral effect of BST2 and this allows viral release from infected cells. Interacts with host FCN1; this interaction enhances viral entry. Interacts with host TLR4; this interaction induces cell death in T-lymphocytes or proinflammatory cytokines and SOCS1 production in monocytes. In terms of assembly, interacts with host entry receptor NPC1. GP1 and GP2delta are part of GP1,2delta soluble complexes released by ectodomain shedding. Post-translationally, the signal peptide region modulates GP's high mannose glycosylation, thereby determining the efficiency of the interactions with DC-SIGN(R). N-glycosylated. In terms of processing, glycosylated; glycosylation is essential for the activation of dendritic cells and macrophages. Post-translationally, O-glycosylated in the mucin-like region. Palmitoylation is not required for its function. In terms of processing, specific enzymatic cleavages in vivo yield mature proteins. The precursor is processed into GP1 and GP2 by host cell furin in the trans Golgi, and maybe by other host proteases, to yield the mature GP1 and GP2 proteins. The cleavage site corresponds to the furin optimal cleavage sequence [KR]-X-[KR]-R. This cleavage does not seem to be required for function. After the internalization of the virus into cell endosomes, GP1 C-terminus is removed by the endosomal proteases cathepsin B, cathepsin L, or both, leaving a 19-kDa N-terminal fragment which is further digested by cathepsin B. This cleaved 19-kDa GP1 can then bind to the host entry receptor NPC1. Proteolytic processing of GP1,2 by host ADAM17 can remove the transmembrane anchor of GP2 and leads to shedding of complexes consisting in GP1 and truncated GP2 (GP1,2delta).

It is found in the virion membrane. The protein resides in the host cell membrane. The protein localises to the secreted. In terms of biological role, trimeric GP1,2 complexes form the virion surface spikes and mediate the viral entry processes, with GP1 acting as the receptor-binding subunit and GP2 as the membrane fusion subunit. At later times of infection, down-regulates the expression of various host cell surface molecules that are essential for immune surveillance and cell adhesion. Down-modulates several integrins including ITGA1, ITGA2, ITGA3, ITGA4, ITGA5, ITGA6, ITGAV and ITGB1. This decrease in cell adhesion molecules may lead to cell detachment, contributing to the disruption of blood vessel integrity and hemorrhages developed during infection (cytotoxicity). Interacts with host TLR4 and thereby stimulates the differentiation and activation of monocytes leading to bystander death of T-lymphocytes. Down-regulates as well the function of host natural killer cells. Counteracts the antiviral effect of host BST2/tetherin that restricts release of progeny virions from infected cells. However, cooperates with VP40 and host BST2 to activate canonical NF-kappa-B pathway in a manner dependent on neddylation. Functions as a decoy for anti-GP1,2 antibodies thereby contributing to viral immune evasion. Interacts and activates host macrophages and dendritic cells inducing up-regulation of cytokine transcription. This effect is mediated throught activation of host TLR4. Its function is as follows. Responsible for binding to the receptor(s) on target cells. Interacts with CD209/DC-SIGN and CLEC4M/DC-SIGNR which act as cofactors for virus entry into dendritic cells (DCs) and endothelial cells. Binding to the macrophage specific lectin CLEC10A also seems to enhance virus infectivity. Interaction with FOLR1/folate receptor alpha may be a cofactor for virus entry in some cell types, although results are contradictory. Members of the Tyro3 receptor tyrosine kinase family also seem to be cell entry factors in filovirus infection. Once attached, the virions are internalized through clathrin-dependent endocytosis and/or macropinocytosis. After internalization of the virus into the endosomes of the host cell, proteolysis of GP1 by two cysteine proteases, CTSB/cathepsin B and CTSL/cathepsin L removes the glycan cap and allows GP1 binding to the host entry receptor NPC1. NPC1-binding, Ca(2+) and acidic pH induce a conformational change of GP2, which unmasks its fusion peptide and permit membranes fusion. Functionally, acts as a class I viral fusion protein. Under the current model, the protein has at least 3 conformational states: pre-fusion native state, pre-hairpin intermediate state, and post-fusion hairpin state. During viral and target cell membrane fusion, the coiled coil regions (heptad repeats) assume a trimer-of-hairpins structure, positioning the fusion peptide in close proximity to the C-terminal region of the ectodomain. The formation of this structure appears to drive apposition and subsequent fusion of viral and target cell membranes. Responsible for penetration of the virus into the cell cytoplasm by mediating the fusion of the membrane of the endocytosed virus particle with the endosomal membrane. Low pH in endosomes induces an irreversible conformational change in GP2, releasing the fusion hydrophobic peptide. This chain is Envelope glycoprotein (GP), found in Epomops franqueti (Franquet's epauletted fruit bat).